Here is an 863-residue protein sequence, read N- to C-terminus: MGYDSQVRTKKRHRITVVCTNCKKRKSKCDRTKPCGTCVRLGDVDSCVYLTDSSGQPESSPSLNDADPLRKQSTPAERISPGFIKKRRSSQTRQDEDHWQRVRELENQSSLYYLPIHEETPFFIDLIPSGFYLETKRSADNLFGLFTDRAIENRDPYLQTMVTFRSIAIKKMMDKLGSNGNNVKNGSLPKSFEALSTFDADDERHISDDVVDKGNNFRMHQTIHKSLFNKFAQYRENNAKKFSSETILAKDYLPPLKILESEVLALFEEKIYNMIPIFDMKILRHEITIFYQNIVEKGNPVSIKHYDHMVFCIILLIIKICRLSVQFSKLTPYIYPVLQEIDTSKFLALVKHYLFETKVLRKCNLLQLQCLILLRFLHWCAPEDGDGPETQYCQILMGTIISSCKEMGINWYCFSHPEKYSFKINRHTRPSYDIMKPSDYISVFRKIWSYVLFWDRKMCFISGEECQIGKTLQCHFKEEADTPTWYIRMLTLDNLMKKINDTLNDDPGKVDLNLLHRLINDLKRNFHILKSLSKNEKETMRHFDFEMEWIIDLFSLSLLHGEMIFYEYDCNITKFYKSFQDLWDMVIHISEKCYNYFFNSDALEVDSLTKFYTNRIVEIVANKVLVIVPAFILRGDRFKTIQYADKKKMIEFLYGVSSVYFNEFGFEYYRCFRKMFTAKIAYKILNRSCEKNAWRIILKFLLNELKLEDNGDSYIDYNDMRLKDICPIILEFQETVQKYDGYRPDILSIWNNEFYPIGKYNDDMTGFKFQMRIKEMQEFLDMEKYSDRFNIFSSFYDHASSQLAKHTEVDTNISITNEQVAETPQKELLQQPLAPALPVNDLIVSEFDVIEDIFDPVDFVSFF.

Positions 19–47 (CTNCKKRKSKCDRTKPCGTCVRLGDVDSC) form a DNA-binding region, zn(2)-C6 fungal-type. Residues 52–63 (DSSGQPESSPSL) show a composition bias toward polar residues. Residues 52 to 99 (DSSGQPESSPSLNDADPLRKQSTPAERISPGFIKKRRSSQTRQDEDHW) form a disordered region.

The protein belongs to the OAF3 family.

It localises to the cytoplasm. Its subcellular location is the nucleus. The protein resides in the mitochondrion. Functionally, transcriptional inhibitor with a significantly increased number of target genes in response to oleate. The chain is Oleate activated transcription factor 3 (OAF3) from Saccharomyces cerevisiae (strain YJM789) (Baker's yeast).